The primary structure comprises 601 residues: Serine/threonine-protein phosphatase 2A 65 kDa regulatory subunit A beta isoform (601 aa).

The residue at position 2 (Ala2) is an N-acetylalanine. HEAT repeat units follow at residues 20–58, 59–96, 97–135, 136–173, 174–212, 213–251, 252–290, 291–333, 334–372, 373–411, 412–450, 451–489, 490–528, 529–567, and 568–601; these read DSLYPIAVLIDELRNEDVQLRLNSIKKLSTIALALGVER, TRSELLPFLTDTIYDEDEVLLALAEQLGNFTGLVGGPD, FAHCLLPPLENLATVEETVVRDKAVESLRQISQEHTPVA, LEAYFVPLVKRLASGDWFTSRTSACGLFSVCYPRASNA, VKAEIRQQFRSLCSDDTPMVRRAAASKLGEFAKVLELDS, VKSEIVPLFTSLASDEQDSVRLLAVEACVSIAQLLSQDD, LETLVMPTLRQAAEDKSWRVRYMVADRFSELQKAMGPKI, TLND…RETI, IMNQILPYIKELVSDTNQHVKSALASVIMGLSTILGKEN, TIEHLLPLFLAQLKDECPDVRLNIISNLDCVNEVIGIRQ, LSQSLLPAIVELAEDAKWRVRLAIIEYMPLLAGQLGVEF, FDEKLNSLCMAWLVDHVYAIREAATNNLMKLVQKFGTEW, AQNTIVPKVLVMANDPNYLHRMTTLFCINALSEACGQEI, TTKQMLPIVLKMAGDQVANVRFNVAKSLQKIGPILDTNA, and LQGEVKPVLQKLGQDEDMDVKYFAQEAISVLALA.

Belongs to the phosphatase 2A regulatory subunit A family. PP2A consists of a common heterodimeric core enzyme, composed of a 36 kDa catalytic subunit (subunit C) and a 65 kDa constant regulatory subunit (PR65 or subunit A), that associates with a variety of regulatory subunits. Proteins that associate with the core dimer include three families of regulatory subunits B (the R2/B/PR55/B55, R3/B''/PR72/PR130/PR59 and R5/B'/B56 families), the 48 kDa variable regulatory subunit, viral proteins, and cell signaling molecules. Interacts with IPO9. Interacts with SGO1. Interacts with RAF1.

In terms of biological role, the PR65 subunit of protein phosphatase 2A serves as a scaffolding molecule to coordinate the assembly of the catalytic subunit and a variable regulatory B subunit. The protein is Serine/threonine-protein phosphatase 2A 65 kDa regulatory subunit A beta isoform (PPP2R1B) of Homo sapiens (Human).